Consider the following 484-residue polypeptide: Zinc metalloproteinase-disintegrin jerdonitin (484 aa).

Residues 1–20 form the signal peptide; sequence MIQVLLVTICLAVFPYQGSS. The propeptide occupies 21–191; the sequence is IILESGNIDD…KLSQIMIPPE (171 aa). Glutamine 192 is modified (pyrrolidone carboxylic acid). Positions 194 to 392 constitute a Peptidase M12B domain; that stretch reads RYIELVIVAD…FTSRCLYNEP (199 aa). The Ca(2+) site is built by glutamate 197 and aspartate 281. 3 cysteine pairs are disulfide-bonded: cysteine 305-cysteine 387, cysteine 345-cysteine 369, and cysteine 347-cysteine 352. Histidine 330 serves as a coordination point for Zn(2+). Glutamate 331 is an active-site residue. 2 residues coordinate Zn(2+): histidine 334 and histidine 340. The Ca(2+) site is built by cysteine 387, asparagine 390, valine 402, asparagine 405, glutamate 409, glutamate 412, and aspartate 415. The Disintegrin domain occupies 400–484; the sequence is PSVCGNYYME…AGCPRNPFHA (85 aa). Intrachain disulfides connect cysteine 403–cysteine 422, cysteine 414–cysteine 432, cysteine 416–cysteine 427, cysteine 426–cysteine 449, cysteine 440–cysteine 446, cysteine 445–cysteine 470, and cysteine 458–cysteine 477. Positions 462–464 match the Cell attachment site motif; that stretch reads RGD.

The protein belongs to the venom metalloproteinase (M12B) family. P-II subfamily. P-IIb sub-subfamily. Monomer. Zn(2+) serves as cofactor. Post-translationally, the N-terminus is blocked. As to expression, expressed by the venom gland.

The protein resides in the secreted. Its activity is regulated as follows. Fibrinogenolytic activity is completely inhibited by EDTA, but not by PMSF. Functionally, snake venom zinc metalloproteinase that inhibits ADP-induced human platelet aggregation (IC(50)=120 nM (native) and IC(50)=248 nM (recombinant)). May act by binding to the receptor GPIIb/GPIIIa (ITGA2B/ITGB3) on the platelet surface. Degrades the alpha-chain of fibrinogen completely and the beta-chain partially, leaving the gamma chain intact. Also inhibits the growth of several cell lines, including human liver cancer cells (Bel7402), human leukemia cells (K562) and human gastric carcinoma cells (BGC823). This Protobothrops jerdonii (Jerdon's pitviper) protein is Zinc metalloproteinase-disintegrin jerdonitin.